The primary structure comprises 593 residues: MAATVATAAAVAPAPAPGTDSASSVHWFRKGLRLHDNPALLAAVRGARCVRCVYILDPWFAASSSVGINRWRFLLQSLEDLDTSLRKLNSRLFVVRGQPADVFPRLFKEWGVTRLTFEYDSEPFGKERDAAIMKMAKEAGVEVVTENSHTLYDLDRIIELNGQKPPLTYKRFQAIISRMELPKKPVGLVTSQQMESCRAEIQENHDETYGVPSLEELGFPTEGLGPAVWQGGETEALARLDKHLERKAWVANYERPRMNANSLLASPTGLSPYLRFGCLSCRLFYYRLWDLYKKVKRNSTPPLSLFGQLLWREFFYTAATNNPRFDRMEGNPICIQIPWDRNPEALAKWAEGKTGFPWIDAIMTQLRQEGWIHHLARHAVACFLTRGDLWVSWESGVRVFDELLLDADFSVNAGSWMWLSCSAFFQQFFHCYCPVGFGRRTDPSGDYIRRYLPKLKAFPSRYIYEPWNAPESIQKAAKCIIGVDYPRPIVNHAETSRLNIERMKQIYQQLSRYRGLCLLASVPSCVEDLSHPVAEPSSSQAGSMSSAGPRPLPSGPASPKRKLEAAEEPPGEELSKRARVAELPTPELPSKDA.

A Photolyase/cryptochrome alpha/beta domain is found at 22-151 (ASSVHWFRKG…EVVTENSHTL (130 aa)). Residue Lys-30 forms a Glycyl lysine isopeptide (Lys-Gly) (interchain with G-Cter in ubiquitin) linkage. Residue Ser-90 is modified to Phosphoserine. Glycyl lysine isopeptide (Lys-Gly) (interchain with G-Cter in ubiquitin) cross-links involve residues Lys-126 and Lys-242. At Ser-266 the chain carries Phosphoserine; by MAPK. Residue Ser-271 participates in FAD binding. Phosphoserine is present on Ser-299. Gln-308 provides a ligand contact to FAD. Lys-348 is covalently cross-linked (Glycyl lysine isopeptide (Lys-Gly) (interchain with G-Cter in ubiquitin)). FAD contacts are provided by residues His-374 and 406–408 (DAD). The interval 390–489 (WVSWESGVRV…IIGVDYPRPI (100 aa)) is required for inhibition of CLOCK-BMAL1-mediated transcription. Glycyl lysine isopeptide (Lys-Gly) (interchain with G-Cter in ubiquitin) cross-links involve residues Lys-475 and Lys-504. The tract at residues 532–593 (PVAEPSSSQA…PTPELPSKDA (62 aa)) is disordered. The segment covering 537-548 (SSSQAGSMSSAG) has biased composition (low complexity). The residue at position 554 (Ser-554) is a Phosphoserine; by GSK3-beta. Ser-558 carries the phosphoserine; by DYRK1A and MAPK modification.

The protein belongs to the DNA photolyase class-1 family. In terms of assembly, component of the circadian core oscillator, which includes the CRY proteins, CLOCK or NPAS2, BMAL1 or BMAL2, CSNK1D and/or CSNK1E, TIMELESS, and the PER proteins. Interacts with TIMELESS. Interacts directly with PER1, PER2 and PER3; interaction with PER2 inhibits its ubiquitination and vice versa. Interacts with CLOCK-BMAL1. Interacts with CLOCK. Interacts with BMAL1. Interacts with NFIL3. Interacts with FBXL3. Interacts with FBXL21. FBXL3, PER2 and the cofactor FAD compete for overlapping binding sites. FBXL3 cannot bind CRY2 that interacts already with PER2 or that contains bound FAD. Interacts with PPP5C (via TPR repeats); the interaction down-regulates the PPP5C phosphatase activity on CSNK1E. Interacts with nuclear receptors AR and NR3C1/GR; the interaction is ligand dependent. Interacts with PRKDC and CIART. Interacts with ISCA1 (in vitro). Interacts with DDB1, USP7 and TARDBP. Interacts with HNF4A. Interacts with PPARA. Interacts with PPARD (via domain NR LBD) and NR1I2 (via domain NR LBD) in a ligand-dependent manner. Interacts with PPARG, NR1I3 and VDR in a ligand-dependent manner. It depends on FAD as a cofactor. (6R)-5,10-methylene-5,6,7,8-tetrahydrofolate is required as a cofactor. Post-translationally, phosphorylation on Ser-266 by MAPK is important for the inhibition of CLOCK-BMAL1-mediated transcriptional activity. Phosphorylation by CSKNE requires interaction with PER1 or PER2. Phosphorylated in a circadian manner at Ser-554 and Ser-558 in the suprachiasmatic nucleus (SCN) and liver. Phosphorylation at Ser-558 by DYRK1A promotes subsequent phosphorylation at Ser-554 by GSK3-beta: the two-step phosphorylation at the neighboring Ser residues leads to its proteasomal degradation. In terms of processing, ubiquitinated by the SCF(FBXL3) and SCF(FBXL21) complexes, regulating the balance between degradation and stabilization. The SCF(FBXL3) complex is mainly nuclear and mediates ubiquitination and subsequent degradation of CRY2. In contrast, cytoplasmic SCF(FBXL21) complex-mediated ubiquitination leads to stabilize CRY2 and counteract the activity of the SCF(FBXL3) complex. The SCF(FBXL3) and SCF(FBXL21) complexes probably mediate ubiquitination at different Lys residues. The SCF(FBXL3) complex recognizes and binds CRY2 phosphorylated at Ser-554 and Ser-558. Ubiquitination may be inhibited by PER2. Deubiquitinated by USP7. Expressed in all tissues examined including fetal brain, fibroblasts, heart, brain, placenta, lung, liver, skeletal muscle, kidney, pancreas, spleen, thymus, prostate, testis, ovary, small intestine, colon and leukocytes. Highest levels in heart and skeletal muscle.

The protein localises to the cytoplasm. Its subcellular location is the nucleus. With respect to regulation, KL001 (N-[3-(9H-carbazol-9-yl)-2-hydroxypropyl]-N-(2-furanylmethyl)-methanesulfonamide) binds to CRY1 and stabilizes it by inhibiting FBXL3- and ubiquitin-dependent degradation of CRY1 resulting in lengthening of the circadian periods. Its function is as follows. Transcriptional repressor which forms a core component of the circadian clock. The circadian clock, an internal time-keeping system, regulates various physiological processes through the generation of approximately 24 hour circadian rhythms in gene expression, which are translated into rhythms in metabolism and behavior. It is derived from the Latin roots 'circa' (about) and 'diem' (day) and acts as an important regulator of a wide array of physiological functions including metabolism, sleep, body temperature, blood pressure, endocrine, immune, cardiovascular, and renal function. Consists of two major components: the central clock, residing in the suprachiasmatic nucleus (SCN) of the brain, and the peripheral clocks that are present in nearly every tissue and organ system. Both the central and peripheral clocks can be reset by environmental cues, also known as Zeitgebers (German for 'timegivers'). The predominant Zeitgeber for the central clock is light, which is sensed by retina and signals directly to the SCN. The central clock entrains the peripheral clocks through neuronal and hormonal signals, body temperature and feeding-related cues, aligning all clocks with the external light/dark cycle. Circadian rhythms allow an organism to achieve temporal homeostasis with its environment at the molecular level by regulating gene expression to create a peak of protein expression once every 24 hours to control when a particular physiological process is most active with respect to the solar day. Transcription and translation of core clock components (CLOCK, NPAS2, BMAL1, BMAL2, PER1, PER2, PER3, CRY1 and CRY2) plays a critical role in rhythm generation, whereas delays imposed by post-translational modifications (PTMs) are important for determining the period (tau) of the rhythms (tau refers to the period of a rhythm and is the length, in time, of one complete cycle). A diurnal rhythm is synchronized with the day/night cycle, while the ultradian and infradian rhythms have a period shorter and longer than 24 hours, respectively. Disruptions in the circadian rhythms contribute to the pathology of cardiovascular diseases, cancer, metabolic syndromes and aging. A transcription/translation feedback loop (TTFL) forms the core of the molecular circadian clock mechanism. Transcription factors, CLOCK or NPAS2 and BMAL1 or BMAL2, form the positive limb of the feedback loop, act in the form of a heterodimer and activate the transcription of core clock genes and clock-controlled genes (involved in key metabolic processes), harboring E-box elements (5'-CACGTG-3') within their promoters. The core clock genes: PER1/2/3 and CRY1/2 which are transcriptional repressors form the negative limb of the feedback loop and interact with the CLOCK|NPAS2-BMAL1|BMAL2 heterodimer inhibiting its activity and thereby negatively regulating their own expression. This heterodimer also activates nuclear receptors NR1D1/2 and RORA/B/G, which form a second feedback loop and which activate and repress BMAL1 transcription, respectively. CRY1 and CRY2 have redundant functions but also differential and selective contributions at least in defining the pace of the SCN circadian clock and its circadian transcriptional outputs. Less potent transcriptional repressor in cerebellum and liver than CRY1, though less effective in lengthening the period of the SCN oscillator. Seems to play a critical role in tuning SCN circadian period by opposing the action of CRY1. With CRY1, dispensable for circadian rhythm generation but necessary for the development of intercellular networks for rhythm synchrony. May mediate circadian regulation of cAMP signaling and gluconeogenesis by blocking glucagon-mediated increases in intracellular cAMP concentrations and in CREB1 phosphorylation. Besides its role in the maintenance of the circadian clock, is also involved in the regulation of other processes. Plays a key role in glucose and lipid metabolism modulation, in part, through the transcriptional regulation of genes involved in these pathways, such as LEP or ACSL4. Represses glucocorticoid receptor NR3C1/GR-induced transcriptional activity by binding to glucocorticoid response elements (GREs). Represses the CLOCK-BMAL1 induced transcription of BHLHE40/DEC1. Represses the CLOCK-BMAL1 induced transcription of NAMPT. Represses PPARD and its target genes in the skeletal muscle and limits exercise capacity. Represses the transcriptional activity of NR1I2. In Homo sapiens (Human), this protein is Cryptochrome-2 (CRY2).